The primary structure comprises 327 residues: Nuclear apoptosis-inducing factor 1 (327 aa).

Positions 1-70 (MAVPAKKRKM…CRRELPEVKK (70 aa)) are required for nuclear localization and apoptosis-inducing activity. Residues 88-98 (AAVEGGEAPGP) show a composition bias toward low complexity. Disordered regions lie at residues 88-118 (AAVE…AGGP) and 303-327 (NMPN…SIIQ). Residues 104 to 117 (AGGPGTGGGSGAGG) show a composition bias toward gly residues. Over residues 316-327 (VAQNGQPDSIIQ) the composition is skewed to polar residues.

The protein belongs to the NAIF1 family. Interacts with HARBI1.

It localises to the nucleus. In terms of biological role, induces apoptosis. The chain is Nuclear apoptosis-inducing factor 1 (NAIF1) from Bos taurus (Bovine).